Reading from the N-terminus, the 60-residue chain is Metallothionein-like protein EMB30 (60 aa).

Belongs to the metallothionein superfamily. Type 15 family.

Its function is as follows. Metallothioneins have a high content of cysteine residues that bind various heavy metals. The protein is Metallothionein-like protein EMB30 (EMB30) of Picea glauca (White spruce).